A 172-amino-acid chain; its full sequence is Adenine phosphoribosyltransferase (172 aa).

It belongs to the purine/pyrimidine phosphoribosyltransferase family. Homodimer.

It localises to the cytoplasm. The enzyme catalyses AMP + diphosphate = 5-phospho-alpha-D-ribose 1-diphosphate + adenine. It participates in purine metabolism; AMP biosynthesis via salvage pathway; AMP from adenine: step 1/1. Catalyzes a salvage reaction resulting in the formation of AMP, that is energically less costly than de novo synthesis. The sequence is that of Adenine phosphoribosyltransferase from Streptococcus pyogenes serotype M5 (strain Manfredo).